Consider the following 544-residue polypeptide: Phenylalanine--tRNA ligase beta subunit (544 aa).

The region spanning 270-346 (LEPKTRFLTK…KGYGYENIKV (77 aa)) is the B5 domain. Asp324, Asp330, Glu333, and Asp334 together coordinate Mg(2+).

Belongs to the phenylalanyl-tRNA synthetase beta subunit family. Type 2 subfamily. Tetramer of two alpha and two beta subunits. It depends on Mg(2+) as a cofactor.

The protein localises to the cytoplasm. It catalyses the reaction tRNA(Phe) + L-phenylalanine + ATP = L-phenylalanyl-tRNA(Phe) + AMP + diphosphate + H(+). The sequence is that of Phenylalanine--tRNA ligase beta subunit from Methanosarcina barkeri (strain Fusaro / DSM 804).